Consider the following 227-residue polypeptide: PKHD-type hydroxylase Caul_0045 (227 aa).

The Fe2OG dioxygenase domain occupies 78-178; it reads TILSPLFNRY…RTASFFWIQS (101 aa). The Fe cation site is built by H96, D98, and H159. R169 contacts 2-oxoglutarate.

Requires Fe(2+) as cofactor. It depends on L-ascorbate as a cofactor.

The sequence is that of PKHD-type hydroxylase Caul_0045 from Caulobacter sp. (strain K31).